Consider the following 800-residue polypeptide: Metabotropic glutamate receptor-like protein C (800 aa).

Positions 1–21 (MKMKIIFLILILIFSINIIKC) are cleaved as a signal peptide. At 22–392 (DKEFKMLTLL…EVEFSQSLQY (371 aa)) the chain is on the extracellular side. N-linked (GlcNAc...) asparagine glycans are attached at residues asparagine 69, asparagine 107, asparagine 166, asparagine 258, asparagine 276, asparagine 302, and asparagine 345. A helical membrane pass occupies residues 393 to 413 (GFSITTGVLIAITIIMMLGIV). The Cytoplasmic segment spans residues 414-426 (RYKSTPSIRSASP). The helical transmembrane segment at 427–447 (IFLNFILAGGIIVYIGIIVWV) threads the bilayer. Over 448–463 (GPANDHQCNARLWLVT) the chain is Extracellular. The helical transmembrane segment at 464–484 (LGFSTLIGSLVVKNFRIWLIF) threads the bilayer. The Cytoplasmic segment spans residues 485 to 499 (DNPELKSISITNYQL). The chain crosses the membrane as a helical span at residues 500 to 520 (FPWVGACLVINIILMSILTSV). The Extracellular segment spans residues 521 to 551 (GDLREIDAQGIDSLGKYEFMKVCKMNSSGAS). A glycan (N-linked (GlcNAc...) asparagine) is linked at asparagine 546. The helical transmembrane segment at 552-572 (TLYTILAYFAALLLVGVFVSW) threads the bilayer. The Cytoplasmic segment spans residues 573–586 (KIRIVDIQEFNESK). The chain crosses the membrane as a helical span at residues 587-607 (AIANTLYAISFCLFVIVPLMI). Topologically, residues 608 to 616 (SPQDKQSET) are extracellular. Residues 617 to 637 (IVLCTAGLFITTAALLIIFTP) form a helical membrane-spanning segment. Residues 638–800 (KFWRVFTLGD…NDTEEEDKNQ (163 aa)) are Cytoplasmic-facing. 2 disordered regions span residues 658–694 (QSNV…TETS) and 718–800 (EFDD…DKNQ). A compositionally biased stretch (acidic residues) spans 718–732 (EFDDNNIEQDNDNDN). Low complexity predominate over residues 733-774 (DNNNNNNNNNNNNNNNNNNNNNNNNNNNNNNNNNNNNNNNNN). Over residues 781–791 (NDEKVEEKQQN) the composition is skewed to basic and acidic residues.

In the N-terminal section; belongs to the BMP lipoprotein family. It in the C-terminal section; belongs to the G-protein coupled receptor 3 family. GABA-B receptor subfamily.

It is found in the membrane. The polypeptide is Metabotropic glutamate receptor-like protein C (grlC) (Dictyostelium discoideum (Social amoeba)).